A 119-amino-acid chain; its full sequence is Large ribosomal subunit protein bL20 (119 aa).

It belongs to the bacterial ribosomal protein bL20 family.

Functionally, binds directly to 23S ribosomal RNA and is necessary for the in vitro assembly process of the 50S ribosomal subunit. It is not involved in the protein synthesizing functions of that subunit. The protein is Large ribosomal subunit protein bL20 of Alkaliphilus metalliredigens (strain QYMF).